Here is a 490-residue protein sequence, read N- to C-terminus: Glutamate--tRNA ligase (490 aa).

Residues 10-20 carry the 'HIGH' region motif; that stretch reads PSPTGSLHIGG. The 'KMSKS' region motif lies at 251 to 255; the sequence is KLSKR. Lys-254 lines the ATP pocket.

The protein belongs to the class-I aminoacyl-tRNA synthetase family. Glutamate--tRNA ligase type 1 subfamily. In terms of assembly, monomer.

It localises to the cytoplasm. It catalyses the reaction tRNA(Glu) + L-glutamate + ATP = L-glutamyl-tRNA(Glu) + AMP + diphosphate. Its function is as follows. Catalyzes the attachment of glutamate to tRNA(Glu) in a two-step reaction: glutamate is first activated by ATP to form Glu-AMP and then transferred to the acceptor end of tRNA(Glu). The chain is Glutamate--tRNA ligase from Moorella thermoacetica (strain ATCC 39073 / JCM 9320).